Here is a 1399-residue protein sequence, read N- to C-terminus: DNA-directed RNA polymerase subunit beta' (1399 aa).

Residues cysteine 70, cysteine 72, cysteine 85, and cysteine 88 each contribute to the Zn(2+) site. 3 residues coordinate Mg(2+): aspartate 460, aspartate 462, and aspartate 464. Positions 814, 888, 895, and 898 each coordinate Zn(2+).

The protein belongs to the RNA polymerase beta' chain family. In terms of assembly, the RNAP catalytic core consists of 2 alpha, 1 beta, 1 beta' and 1 omega subunit. When a sigma factor is associated with the core the holoenzyme is formed, which can initiate transcription. It depends on Mg(2+) as a cofactor. Zn(2+) is required as a cofactor.

The enzyme catalyses RNA(n) + a ribonucleoside 5'-triphosphate = RNA(n+1) + diphosphate. DNA-dependent RNA polymerase catalyzes the transcription of DNA into RNA using the four ribonucleoside triphosphates as substrates. This chain is DNA-directed RNA polymerase subunit beta', found in Pseudomonas entomophila (strain L48).